A 110-amino-acid polypeptide reads, in one-letter code: Flagellar hook-basal body complex protein FliE (110 aa).

This sequence belongs to the FliE family.

It is found in the bacterial flagellum basal body. This Bordetella petrii (strain ATCC BAA-461 / DSM 12804 / CCUG 43448) protein is Flagellar hook-basal body complex protein FliE.